An 87-amino-acid chain; its full sequence is U3-theraphotoxin-Hhn1e (87 aa).

An N-terminal signal peptide occupies residues 1–24 (MVNMKASMFLTFAGLVLLFVVCYA). Positions 25 to 52 (SESEEKEFPKGMLSSIFAVDNDFKQEER) are excised as a propeptide. 3 disulfides stabilise this stretch: C54-C67, C61-C72, and C66-C79.

The protein belongs to the neurotoxin 10 (Hwtx-1) family. 51 (Hntx-8) subfamily. Hntx-8 sub-subfamily. Expressed by the venom gland.

It localises to the secreted. Functionally, ion channel inhibitor. This is U3-theraphotoxin-Hhn1e from Cyriopagopus hainanus (Chinese bird spider).